The following is a 1005-amino-acid chain: Defense-associated sirtuin 2 (1005 aa).

The tract at residues 1–295 (MVKVDLESKR…YSAVMDLLIE (295 aa)) is SIR2. The interval 56–111 (YPQWWRLVDKYHEELYGSPKKGNYSSDEYLRIPQIFYNVKGEMAFDGILKDFFQVD) is inter-dimer interaction. Active-site residues include Tyr134, Asp135, and His171. An MID region spans residues 296–548 (SQENKFITKD…YKILEFLSDN (253 aa)). The segment at 549–1005 (QFLYDDTVKL…YLEILMNYFI (457 aa)) is CTD.

In terms of assembly, homotetramer (dimer of dimers). Homodimer. The SIR2 domains are arranged in a central core, adopting a head-to-head arrangement, while the CTDs are positioned at the periphery of the complex. Tetramerization is necessary for the activation of NADase activity. The NADase enzymatic activity of this homotetrameric form is autoinhibited. The activated form of DSR2 (after binding to the phage tube protein) exists as tetramers and dimers, with the tetramers exhibiting more NADase activity. Each tetramer binds 4 NAD(+) molecules. As to quaternary structure, (Microbial infection) Interacts (via C-terminus) with phage SPR tail tube monomer protein (via N-terminus) in a 4:4 DSR2-Tube assembly; this interaction induces a conformation change of the tube protein and activates the NADase activity of DSR2. (Microbial infection) Interacts (via C-terminus) with phage SPbeta DSAD1 in a 4:2 ratio; this interaction prevents activation of the NADase defense activity of DSR2.

It carries out the reaction NAD(+) + H2O = ADP-D-ribose + nicotinamide + H(+). Its activity is regulated as follows. (Microbial infection) NADase activity is activated through the binding of SPR phage tail tube monomer protein. NADase activity is inhibited through the binding to the phage SPbeta DSR anti-defense 1 (DSAD1). In terms of biological role, anti-phage defense protein that is activated through the binding to the phage tail tube protein monomer and which hydrolyzes NAD+ upon activation (NADase activity). The resulting depletion of NAD(+) leads to an abortive infection. This Bacillus subtilis protein is Defense-associated sirtuin 2.